Consider the following 195-residue polypeptide: Glycerol-3-phosphate acyltransferase (195 aa).

6 helical membrane-spanning segments follow: residues 2 to 22, 54 to 74, 80 to 100, 107 to 127, 132 to 152, and 155 to 175; these read IFFSILITIFAYFLGSISSAI, IAISVILFDILKGAIPMWLGY, PIFLGATAVFSCLGHMYPIFF, GVATAFGVLTTIDLHLSIVMI, LTVLSFGYSSLGAIVTAFIIP, and AWHFQSQYLLPTIIISSLVVI.

This sequence belongs to the PlsY family. As to quaternary structure, probably interacts with PlsX.

It localises to the cell inner membrane. The catalysed reaction is an acyl phosphate + sn-glycerol 3-phosphate = a 1-acyl-sn-glycero-3-phosphate + phosphate. The protein operates within lipid metabolism; phospholipid metabolism. In terms of biological role, catalyzes the transfer of an acyl group from acyl-phosphate (acyl-PO(4)) to glycerol-3-phosphate (G3P) to form lysophosphatidic acid (LPA). This enzyme utilizes acyl-phosphate as fatty acyl donor, but not acyl-CoA or acyl-ACP. The protein is Glycerol-3-phosphate acyltransferase of Blochmanniella pennsylvanica (strain BPEN).